The following is a 138-amino-acid chain: Large ribosomal subunit protein uL16 (138 aa).

Over residues 1-19 (MLIPKRVKYRRQHRPHRSG) the composition is skewed to basic residues. The segment at 1–24 (MLIPKRVKYRRQHRPHRSGVSKGG) is disordered.

The protein belongs to the universal ribosomal protein uL16 family. In terms of assembly, part of the 50S ribosomal subunit.

Its function is as follows. Binds 23S rRNA and is also seen to make contacts with the A and possibly P site tRNAs. In Corynebacterium jeikeium (strain K411), this protein is Large ribosomal subunit protein uL16.